The following is a 585-amino-acid chain: Bestrophin-1 (585 aa).

The Cytoplasmic segment spans residues methionine 1–leucine 31. Ca(2+) is bound at residue alanine 10. Residues leucine 32–arginine 51 traverse the membrane as a helical segment. The Extracellular portion of the chain corresponds to leucine 52 to leucine 60. Residues methionine 61–leucine 82 traverse the membrane as a helical segment. Residues glycine 83–threonine 237 are Cytoplasmic-facing. Residues glutamine 238–arginine 255 traverse the membrane as a helical segment. At glutamine 256–proline 274 the chain is on the extracellular side. The helical transmembrane segment at valine 275–leucine 288 threads the bilayer. Residues lysine 289–serine 585 are Cytoplasmic-facing. Ca(2+)-binding residues include glutamine 293, asparagine 296, aspartate 301, and aspartate 304. The interval proline 346–glutamine 379 is auto-inhibitory segment.

Belongs to the anion channel-forming bestrophin (TC 1.A.46) family. Calcium-sensitive chloride channel subfamily. As to quaternary structure, interacts with YWHAG; this interaction promotes the ligand-gated L-glutamate channel activity leading to the positive regulation of NMDA glutamate receptor activity through the L-glutamate secretion.

It localises to the cell membrane. The protein localises to the basolateral cell membrane. It carries out the reaction chloride(in) = chloride(out). It catalyses the reaction hydrogencarbonate(in) = hydrogencarbonate(out). The catalysed reaction is 4-aminobutanoate(in) = 4-aminobutanoate(out). The enzyme catalyses L-glutamate(out) = L-glutamate(in). Functionally, ligand-gated anion channel that allows the movement of anions across cell membranes when activated by calcium (Ca2+). Allows the movement of chloride and hydrogencarbonate. Found in a partially open conformation leading to significantly smaller chloride movement. Upon F2R/PAR-1 activation, the sequestered calcium is released into the cytosol of astrocytes, leading to the (Ca2+)-dependent release of L-glutamate into the synaptic cleft that targets the neuronal postsynaptic GRIN2A/NMDAR receptor resulting in the synaptic plasticity regulation. Upon activation of the norepinephrine-alpha-1 adrenergic receptor signaling pathway, transports as well D-serine than L-glutamate in a (Ca2+)-dependent manner, leading to activation of adjacent NMDAR receptors and therefore regulates the heterosynaptic long-term depression and metaplasticity during initial memory acquisition. Releases the 4-aminobutanoate neurotransmitter in a (Ca2+)-dependent manner, and participates in its tonic release from cerebellar glial cells. The sequence is that of Bestrophin-1 (BEST1) from Macaca fascicularis (Crab-eating macaque).